A 170-amino-acid chain; its full sequence is MTELQSALLLRRQLAELNKNPVEGFSAGLIDDNDLYRWEVLIIGPPDTLYEGGVFKAHLTFPKDYPLRPPKMKFITEIWHPNVDKNGDVCISILHEPGEDKYGYEKPEGRWLPIHTVETIMISVISMLADPNGDSPANVDAAKEWREDRNGEFKRKVARCVRKSQETAFE.

Methionine 1 carries the N-acetylmethionine modification. Threonine 2 carries the N-acetylthreonine; in Ubiquitin-conjugating enzyme E2 G1, N-terminally processed modification. Residues 5–166 (QSALLLRRQL…VARCVRKSQE (162 aa)) enclose the UBC core domain. Cysteine 90 (glycyl thioester intermediate) is an active-site residue.

This sequence belongs to the ubiquitin-conjugating enzyme family. In terms of processing, autoubiquitinated.

It catalyses the reaction S-ubiquitinyl-[E1 ubiquitin-activating enzyme]-L-cysteine + [E2 ubiquitin-conjugating enzyme]-L-cysteine = [E1 ubiquitin-activating enzyme]-L-cysteine + S-ubiquitinyl-[E2 ubiquitin-conjugating enzyme]-L-cysteine.. It functions in the pathway protein modification; protein ubiquitination. Functionally, accepts ubiquitin from the E1 complex and catalyzes its covalent attachment to other proteins. In vitro catalyzes 'Lys-48'-, as well as 'Lys-63'-linked polyubiquitination. May be involved in degradation of muscle-specific proteins. Mediates polyubiquitination of CYP3A4. This is Ubiquitin-conjugating enzyme E2 G1 (UBE2G1) from Macaca fascicularis (Crab-eating macaque).